We begin with the raw amino-acid sequence, 196 residues long: Putative NADH dehydrogenase/NAD(P)H nitroreductase XOO4023 (196 aa).

The protein belongs to the nitroreductase family. HadB/RutE subfamily. Requires FMN as cofactor.

This is Putative NADH dehydrogenase/NAD(P)H nitroreductase XOO4023 from Xanthomonas oryzae pv. oryzae (strain MAFF 311018).